The chain runs to 295 residues: Ribosomal RNA small subunit methyltransferase H (295 aa).

Residues 32–34 (GGY), D50, F77, D98, and Q105 each bind S-adenosyl-L-methionine. Positions 275–295 (KEISENTRSRSAKLRGIVKEE) are disordered.

The protein belongs to the methyltransferase superfamily. RsmH family.

The protein localises to the cytoplasm. It catalyses the reaction cytidine(1402) in 16S rRNA + S-adenosyl-L-methionine = N(4)-methylcytidine(1402) in 16S rRNA + S-adenosyl-L-homocysteine + H(+). Functionally, specifically methylates the N4 position of cytidine in position 1402 (C1402) of 16S rRNA. The polypeptide is Ribosomal RNA small subunit methyltransferase H (Anaplasma phagocytophilum (strain HZ)).